The chain runs to 229 residues: Flagellar calcium-binding protein TB-1.7G (229 aa).

The disordered stretch occupies residues 1 to 25; sequence GSKNASNPKDGAASKGGKDGKTTAD. Residues 16–25 are compositionally biased toward basic and acidic residues; that stretch reads GGKDGKTTAD. 4 EF-hand domains span residues 44-79, 80-115, 126-161, and 163-198; these read ESKS…ILKL, DEFT…LVEF, YDIF…LKEW, and VDIT…KKLQ. Ca(2+) is bound by residues D57, N59, T61, K63, and E68. Residues D139, D141, S143, E150, D176, N178, S180, and E187 each contribute to the Ca(2+) site. Positions 202–229 are disordered; sequence DPDDEENGANEGDGANAGDGVPAAEGSA. The segment covering 210 to 221 has biased composition (low complexity); the sequence is ANEGDGANAGDG.

This sequence belongs to the calflagin family.

The protein resides in the cell projection. It localises to the cilium. It is found in the flagellum. Functionally, may contribute to the rapid motility of the trypanosomes, playing a role either in flagellar structure or in calcium metabolism. Could alternate between a GDP-bound inactive form to a calcium/GTP-bound active form. This chain is Flagellar calcium-binding protein TB-1.7G, found in Trypanosoma brucei brucei.